The chain runs to 253 residues: Ribosome-inactivating protein saporin-9 (253 aa).

E176 is an active-site residue.

The catalysed reaction is Endohydrolysis of the N-glycosidic bond at one specific adenosine on the 28S rRNA.. In terms of biological role, ribosome-inactivating protein of type 1, inhibits protein synthesis in animal cells. This is Ribosome-inactivating protein saporin-9 (SAP9) from Saponaria officinalis (Common soapwort).